Reading from the N-terminus, the 248-residue chain is UPF0328 protein ECU06_0030/ECU06_1690/ECU11_0020 (248 aa).

2 disordered regions span residues 1–34 (MVRH…HPSR) and 51–81 (ASAE…ILPD). 2 stretches are compositionally biased toward polar residues: residues 10–19 (PKTTNPNPES) and 61–76 (QNLS…THQS).

The protein belongs to the UPF0328 family.

This chain is UPF0328 protein ECU06_0030/ECU06_1690/ECU11_0020, found in Encephalitozoon cuniculi (strain GB-M1) (Microsporidian parasite).